We begin with the raw amino-acid sequence, 435 residues long: Glutamate-1-semialdehyde 2,1-aminomutase (435 aa).

Lys-266 bears the N6-(pyridoxal phosphate)lysine mark.

It belongs to the class-III pyridoxal-phosphate-dependent aminotransferase family. HemL subfamily. As to quaternary structure, homodimer. Requires pyridoxal 5'-phosphate as cofactor.

It is found in the cytoplasm. The enzyme catalyses (S)-4-amino-5-oxopentanoate = 5-aminolevulinate. The protein operates within porphyrin-containing compound metabolism; protoporphyrin-IX biosynthesis; 5-aminolevulinate from L-glutamyl-tRNA(Glu): step 2/2. This chain is Glutamate-1-semialdehyde 2,1-aminomutase, found in Nitrosomonas europaea (strain ATCC 19718 / CIP 103999 / KCTC 2705 / NBRC 14298).